A 67-amino-acid polypeptide reads, in one-letter code: ATP synthase F(0) complex subunit 8 (67 aa).

A helical membrane pass occupies residues 8–24 (TWFIMIFSMFLTLFILF). At Lys-54 the chain carries N6-acetyllysine; alternate. Lys-54 is modified (N6-succinyllysine; alternate). Lys-57 carries the post-translational modification N6-acetyllysine.

It belongs to the ATPase protein 8 family. Component of the ATP synthase complex composed at least of ATP5F1A/subunit alpha, ATP5F1B/subunit beta, ATP5MC1/subunit c (homooctomer), MT-ATP6/subunit a, MT-ATP8/subunit 8, ATP5ME/subunit e, ATP5MF/subunit f, ATP5MG/subunit g, ATP5MK/subunit k, ATP5MJ/subunit j, ATP5F1C/subunit gamma, ATP5F1D/subunit delta, ATP5F1E/subunit epsilon, ATP5PF/subunit F6, ATP5PB/subunit b, ATP5PD/subunit d, ATP5PO/subunit OSCP. ATP synthase complex consists of a soluble F(1) head domain (subunits alpha(3) and beta(3)) - the catalytic core - and a membrane F(0) domain - the membrane proton channel (subunits c, a, 8, e, f, g, k and j). These two domains are linked by a central stalk (subunits gamma, delta, and epsilon) rotating inside the F1 region and a stationary peripheral stalk (subunits F6, b, d, and OSCP). Interacts with PRICKLE3.

Its subcellular location is the mitochondrion membrane. Functionally, subunit 8, of the mitochondrial membrane ATP synthase complex (F(1)F(0) ATP synthase or Complex V) that produces ATP from ADP in the presence of a proton gradient across the membrane which is generated by electron transport complexes of the respiratory chain. ATP synthase complex consist of a soluble F(1) head domain - the catalytic core - and a membrane F(1) domain - the membrane proton channel. These two domains are linked by a central stalk rotating inside the F(1) region and a stationary peripheral stalk. During catalysis, ATP synthesis in the catalytic domain of F(1) is coupled via a rotary mechanism of the central stalk subunits to proton translocation. In vivo, can only synthesize ATP although its ATP hydrolase activity can be activated artificially in vitro. Part of the complex F(0) domain. This Canis lupus familiaris (Dog) protein is ATP synthase F(0) complex subunit 8.